Consider the following 394-residue polypeptide: S-adenosylmethionine synthase 1 (394 aa).

E11 provides a ligand contact to Mg(2+). Residue H17 coordinates ATP. K(+) is bound at residue E45. E58 and Q101 together coordinate L-methionine. ATP contacts are provided by residues 169 to 171, 237 to 240, D248, 254 to 255, A271, K275, and K279; these read DGK, SGRF, and RK. D248 lines the L-methionine pocket. Residue K279 participates in L-methionine binding.

The protein belongs to the AdoMet synthase family. In terms of assembly, homotetramer. The cofactor is Mn(2+). It depends on Mg(2+) as a cofactor. Co(2+) serves as cofactor. K(+) is required as a cofactor.

The protein localises to the cytoplasm. It catalyses the reaction L-methionine + ATP + H2O = S-adenosyl-L-methionine + phosphate + diphosphate. The protein operates within amino-acid biosynthesis; S-adenosyl-L-methionine biosynthesis; S-adenosyl-L-methionine from L-methionine: step 1/1. Functionally, catalyzes the formation of S-adenosylmethionine from methionine and ATP. The reaction comprises two steps that are both catalyzed by the same enzyme: formation of S-adenosylmethionine (AdoMet) and triphosphate, and subsequent hydrolysis of the triphosphate. The protein is S-adenosylmethionine synthase 1 (SAM1) of Hordeum vulgare (Barley).